Consider the following 433-residue polypeptide: CinA-like protein (433 aa).

It belongs to the CinA family.

The sequence is that of CinA-like protein from Prochlorococcus marinus subsp. pastoris (strain CCMP1986 / NIES-2087 / MED4).